Consider the following 500-residue polypeptide: Cytochrome P450 71B38 (500 aa).

Residues 3-23 (IFLCFLLLLPLSLILFKKLLP) form a helical membrane-spanning segment. Heme is bound at residue Cys441.

The protein belongs to the cytochrome P450 family. The cofactor is heme.

Its subcellular location is the membrane. The protein is Cytochrome P450 71B38 (CYP71B38) of Arabidopsis thaliana (Mouse-ear cress).